A 321-amino-acid chain; its full sequence is Lipoyl synthase (321 aa).

[4Fe-4S] cluster is bound by residues Cys-68, Cys-73, Cys-79, Cys-94, Cys-98, Cys-101, and Ser-308. Residues 80-297 enclose the Radical SAM core domain; sequence FNHGTATFMI…KVLADELGFT (218 aa).

This sequence belongs to the radical SAM superfamily. Lipoyl synthase family. The cofactor is [4Fe-4S] cluster.

It is found in the cytoplasm. The catalysed reaction is [[Fe-S] cluster scaffold protein carrying a second [4Fe-4S](2+) cluster] + N(6)-octanoyl-L-lysyl-[protein] + 2 oxidized [2Fe-2S]-[ferredoxin] + 2 S-adenosyl-L-methionine + 4 H(+) = [[Fe-S] cluster scaffold protein] + N(6)-[(R)-dihydrolipoyl]-L-lysyl-[protein] + 4 Fe(3+) + 2 hydrogen sulfide + 2 5'-deoxyadenosine + 2 L-methionine + 2 reduced [2Fe-2S]-[ferredoxin]. It participates in protein modification; protein lipoylation via endogenous pathway; protein N(6)-(lipoyl)lysine from octanoyl-[acyl-carrier-protein]: step 2/2. Its function is as follows. Catalyzes the radical-mediated insertion of two sulfur atoms into the C-6 and C-8 positions of the octanoyl moiety bound to the lipoyl domains of lipoate-dependent enzymes, thereby converting the octanoylated domains into lipoylated derivatives. The sequence is that of Lipoyl synthase from Shewanella denitrificans (strain OS217 / ATCC BAA-1090 / DSM 15013).